A 176-amino-acid polypeptide reads, in one-letter code: MDLSEPIHDFLLVFLGSGLILGGLGVVLLPNPIYSAFSLGLVLVCTSLFYILSNSYFVAAAQLLIYVGAINVLIIFAVMFMNGSEYYKDFHLWTVGNGITSMVCISLFISLITTISDTSWYGIIWTTRSNQIIEQDFLSNSQQIGIHLSTDFFLPFELISIILLVALIGAIAVARQ.

5 helical membrane passes run 10 to 30 (FLLV…VLLP), 32 to 52 (PIYS…FYIL), 61 to 81 (AQLL…VMFM), 92 to 112 (LWTV…ISLI), and 152 to 172 (FFLP…GAIA).

This sequence belongs to the complex I subunit 6 family. As to quaternary structure, NDH is composed of at least 16 different subunits, 5 of which are encoded in the nucleus.

Its subcellular location is the plastid. The protein resides in the chloroplast thylakoid membrane. It carries out the reaction a plastoquinone + NADH + (n+1) H(+)(in) = a plastoquinol + NAD(+) + n H(+)(out). The enzyme catalyses a plastoquinone + NADPH + (n+1) H(+)(in) = a plastoquinol + NADP(+) + n H(+)(out). Functionally, NDH shuttles electrons from NAD(P)H:plastoquinone, via FMN and iron-sulfur (Fe-S) centers, to quinones in the photosynthetic chain and possibly in a chloroplast respiratory chain. The immediate electron acceptor for the enzyme in this species is believed to be plastoquinone. Couples the redox reaction to proton translocation, and thus conserves the redox energy in a proton gradient. The chain is NAD(P)H-quinone oxidoreductase subunit 6, chloroplastic (ndhG) from Solanum bulbocastanum (Wild potato).